The chain runs to 517 residues: Acetyl-coenzyme A carboxylase carboxyl transferase subunit beta, chloroplastic (517 aa).

Basic and acidic residues-rich tracts occupy residues 1-17 (MKPT…KSNE), 24-41 (GDNK…KSNE), 48-65 (GDNK…KSNE), and 72-81 (GDKQKDKKDG). 2 disordered regions span residues 1–179 (MKPT…KEEE) and 204–234 (KHRD…DSEA). Residues 87–131 (YDDEYEEDLEYDDEYEEDLEYDDEYEEDLEYDDEEYDDEYEEDLE) are compositionally biased toward acidic residues. 2 stretches are compositionally biased toward basic and acidic residues: residues 132–179 (GDNK…KEEE) and 209–229 (KSVP…RDTD). The CoA carboxyltransferase N-terminal domain maps to 243 to 514 (LWVHCKLCSG…NSQVINIYNY (272 aa)). The Zn(2+) site is built by C247, C250, C266, and C269. The segment at 247–269 (CKLCSGFNYKKILKSKNNVCEQC) adopts a C4-type zinc-finger fold.

This sequence belongs to the AccD/PCCB family. In terms of assembly, acetyl-CoA carboxylase is a heterohexamer composed of biotin carboxyl carrier protein, biotin carboxylase and 2 subunits each of ACCase subunit alpha and ACCase plastid-coded subunit beta (accD). Requires Zn(2+) as cofactor.

It localises to the plastid. The protein localises to the chloroplast stroma. It carries out the reaction N(6)-carboxybiotinyl-L-lysyl-[protein] + acetyl-CoA = N(6)-biotinyl-L-lysyl-[protein] + malonyl-CoA. It functions in the pathway lipid metabolism; malonyl-CoA biosynthesis; malonyl-CoA from acetyl-CoA: step 1/1. Functionally, component of the acetyl coenzyme A carboxylase (ACC) complex. Biotin carboxylase (BC) catalyzes the carboxylation of biotin on its carrier protein (BCCP) and then the CO(2) group is transferred by the transcarboxylase to acetyl-CoA to form malonyl-CoA. This chain is Acetyl-coenzyme A carboxylase carboxyl transferase subunit beta, chloroplastic, found in Oenothera elata subsp. hookeri (Hooker's evening primrose).